Here is a 321-residue protein sequence, read N- to C-terminus: Fructose-1,6-bisphosphatase 2 class 2 (321 aa).

Positions 32, 56, 84, and 87 each coordinate Mn(2+). Substrate is bound by residues 87 to 89 (EGT), tyrosine 118, 163 to 165 (KPR), 185 to 187 (DGD), and glycine 209. A Mn(2+)-binding site is contributed by glutamate 212.

It belongs to the FBPase class 2 family. Homodimer. Requires Mn(2+) as cofactor.

The enzyme catalyses beta-D-fructose 1,6-bisphosphate + H2O = beta-D-fructose 6-phosphate + phosphate. Its activity is regulated as follows. Competitively inhibited by low concentrations of phosphate (IC50 of 1.2 mM) and is also sensitive to Li(+) (IC50 of 15.8 mM). Also inhibited by 1 mM ATP or 50 mM KCl (60% and 20% residual activity, respectively). Slightly activated (40-50%) by the addition of 1 mM dithiothreitol in vitro. In terms of biological role, catalyzes the hydrolysis of fructose 1,6-bisphosphate to fructose 6-phosphate. Also displays a low activity toward glucose 1,6-bisphosphate, and no activity against ribulose 1,5-bisphosphate, fructose 2,6-bisphosphate, or fructose 1-phosphate. The protein is Fructose-1,6-bisphosphatase 2 class 2 (yggF) of Escherichia coli (strain K12).